Here is a 305-residue protein sequence, read N- to C-terminus: Methionyl-tRNA formyltransferase (305 aa).

Residue 108–111 participates in (6S)-5,6,7,8-tetrahydrofolate binding; it reads SLLP.

It belongs to the Fmt family.

The enzyme catalyses L-methionyl-tRNA(fMet) + (6R)-10-formyltetrahydrofolate = N-formyl-L-methionyl-tRNA(fMet) + (6S)-5,6,7,8-tetrahydrofolate + H(+). Its function is as follows. Attaches a formyl group to the free amino group of methionyl-tRNA(fMet). The formyl group appears to play a dual role in the initiator identity of N-formylmethionyl-tRNA by promoting its recognition by IF2 and preventing the misappropriation of this tRNA by the elongation apparatus. In Thermus thermophilus (strain ATCC BAA-163 / DSM 7039 / HB27), this protein is Methionyl-tRNA formyltransferase.